Reading from the N-terminus, the 776-residue chain is Kinesin-like protein KIN-8A (776 aa).

Disordered regions lie at residues 1 to 31 (MPVS…RGGA) and 80 to 135 (VGEV…KSSH). The span at 7–26 (ASAAGGQPWSSAAPAPASAP) shows a compositional bias: low complexity. Pro residues predominate over residues 123–132 (PPPPPAPPPK). In terms of domain architecture, Kinesin motor spans 205 to 534 (RIMVFVRLRP…LHWADRAKEI (330 aa)). Position 297 to 304 (297 to 304 (GATGAGKT)) interacts with ATP. A coiled-coil region spans residues 554-592 (TDQAKLVLELQKENSELRQQLARQQQKLLTVQAQTLASN). The tract at residues 590–611 (ASNASPQQSPAPSAQISTPCST) is disordered. A compositionally biased stretch (low complexity) spans 593–604 (ASPQQSPAPSAQ). Residues 634 to 671 (AAENAQVRDLQRKVKAMEAEIEKMKKEHLLQLKQKDEF) are a coiled coil.

It belongs to the TRAFAC class myosin-kinesin ATPase superfamily. Kinesin family. KIN-8 subfamily.

This is Kinesin-like protein KIN-8A from Oryza sativa subsp. japonica (Rice).